Reading from the N-terminus, the 164-residue chain is Photosystem II extrinsic protein V (164 aa).

An N-terminal signal peptide occupies residues 1-27 (MIPNRKIQLSLFAVIIVFETLLNQVYA). Heme c contacts are provided by C64, C67, H68, and M131.

This sequence belongs to the cytochrome c family. PsbV subfamily. PSII is composed of 1 copy each of membrane proteins PsbA, PsbB, PsbC, PsbD, PsbE, PsbF, PsbH, PsbI, PsbJ, PsbK, PsbL, PsbM, PsbT, PsbY, PsbZ, Psb30/Ycf12, at least 3 peripheral proteins of the oxygen-evolving complex and a large number of cofactors. It forms dimeric complexes. The extrinsic subunits in red algae are PsbO (OEC33), PsbQ', cytochrome c-550 and PsbU. It depends on heme c as a cofactor.

The protein resides in the plastid. Its subcellular location is the chloroplast thylakoid membrane. Functionally, one of the extrinsic, lumenal subunits of photosystem II (PSII). PSII is a light-driven water plastoquinone oxidoreductase, using light energy to abstract electrons from H(2)O, generating a proton gradient subsequently used for ATP formation. The extrinsic proteins stabilize the structure of photosystem II oxygen-evolving complex (OEC), the ion environment of oxygen evolution and protect the OEC against heat-induced inactivation. This chain is Photosystem II extrinsic protein V, found in Gracilaria tenuistipitata var. liui (Red alga).